A 155-amino-acid chain; its full sequence is MSRRGTAKGKTAKYDPIYRNRLVNMLVNRILKHGKKALAYKILYGAVKKIQQNTKTNPLSILRQAIRGVTPDIAVKARRKSGSTRQVPIEIGSTQGKTLAIRWLLGASRKRPGQNMAFKLSSELVDAAKGRGGAIRKKEETIKMAEANRAFAHFR.

It belongs to the universal ribosomal protein uS7 family. Part of the 30S ribosomal subunit.

It localises to the plastid. Its subcellular location is the chloroplast. Its function is as follows. One of the primary rRNA binding proteins, it binds directly to 16S rRNA where it nucleates assembly of the head domain of the 30S subunit. In Sagittaria latifolia (Broadleaf arrowhead), this protein is Small ribosomal subunit protein uS7c (rps7).